Consider the following 470-residue polypeptide: Growth/differentiation factor 6 (470 aa).

The first 22 residues, M1–G22, serve as a signal peptide directing secretion. Residues F23–R350 constitute a propeptide that is removed on maturation. The interval I28–V98 is disordered. The segment covering S45 to R80 has biased composition (basic and acidic residues). The N-linked (GlcNAc...) asparagine glycan is linked to N120. Disordered regions lie at residues P247 to F272 and T308 to R366. The span at G321–G333 shows a compositional bias: pro residues. The span at G345–R366 shows a compositional bias: basic residues. Disulfide bonds link C369/C435, C398/C467, and C402/C469.

The protein belongs to the TGF-beta family. As to quaternary structure, homodimer; disulfide-linked.

The protein resides in the secreted. Its function is as follows. Growth factor that controls proliferation and cellular differentiation in the retina and bone formation. Plays a key role in regulating apoptosis during retinal development. Establishes dorsal-ventral positional information in the retina and controls the formation of the retinotectal map. Required for normal formation of bones and joints in the limbs, skull, digits and axial skeleton. Plays a key role in establishing boundaries between skeletal elements during development. Regulation of GDF6 expression seems to be a mechanism for evolving species-specific changes in skeletal structures. Seems to positively regulate differentiation of chondrogenic tissue through the growth factor receptors subunits BMPR1A, BMPR1B, BMPR2 and ACVR2A, leading to the activation of SMAD1-SMAD5-SMAD8 complex. The regulation of chondrogenic differentiation is inhibited by NOG. Also involved in the induction of adipogenesis from mesenchymal stem cells. This mechanism acts through the growth factor receptors subunits BMPR1A, BMPR2 and ACVR2A and the activation of SMAD1-SMAD5-SMAD8 complex and MAPK14/p38. This is Growth/differentiation factor 6 (GDF6) from Bos taurus (Bovine).